We begin with the raw amino-acid sequence, 257 residues long: Phosphomannomutase (257 aa).

Residue Asp-19 is the Nucleophile of the active site. The Mg(2+) site is built by Asp-19 and Asp-21. Asp-21 (proton donor/acceptor) is an active-site residue. The alpha-D-mannose 1-phosphate site is built by Arg-28, Arg-133, Arg-144, Arg-151, Ser-189, and Asp-191. The Mg(2+) site is built by Asp-219, Phe-231, Asp-233, and Thr-236.

Belongs to the eukaryotic PMM family. As to quaternary structure, homodimer.

Its subcellular location is the cytoplasm. It carries out the reaction alpha-D-mannose 1-phosphate = D-mannose 6-phosphate. The protein operates within nucleotide-sugar biosynthesis; GDP-alpha-D-mannose biosynthesis; alpha-D-mannose 1-phosphate from D-fructose 6-phosphate: step 2/2. Its function is as follows. Involved in the synthesis of the GDP-mannose and dolichol-phosphate-mannose required for a number of critical mannosyl transfer reactions. The protein is Phosphomannomutase (pmm1) of Schizosaccharomyces pombe (strain 972 / ATCC 24843) (Fission yeast).